The primary structure comprises 289 residues: uncharacterized protein (289 aa).

This is an uncharacterized protein from Acanthamoeba polyphaga mimivirus (APMV).